We begin with the raw amino-acid sequence, 358 residues long: Na(+)/H(+) exchange regulatory cofactor NHE-RF1 (358 aa).

At S2 the chain carries N-acetylserine. Phosphoserine is present on residues S2 and S46. In terms of domain architecture, PDZ 1 spans L14 to E94. Positions Q114–E134 are enriched in low complexity. 2 disordered regions span residues Q114–G192 and S269–L358. Over residues N135–K149 the composition is skewed to basic and acidic residues. The PDZ 2 domain occupies L154–E234. A phosphoserine mark is found at S162, S269, S280, S290, and S291. Polar residues predominate over residues R287–Q306. T293 bears the Phosphothreonine mark. Phosphoserine occurs at positions 294, 299, and 302. The segment covering D307–P319 has biased composition (low complexity). Positions W348–L358 are enriched in basic and acidic residues.

As to quaternary structure, homodimer, and heterodimer with NHERF2. Binds the N-termini of EZR, RDX and MSN. Binds the C-termini of PDGFRA, PDGFRB, ADRB2, NOS2 and CFTR. Binds ARHGAP17, EPI64, RACK1, OPRK1, GNAQ, CTNNB1 and PLCB3. Binds PDZK1. Interacts with CLCN3. Binds the C-terminus of PAG1. In resting T-cells, part of a PAG1-NHERF1-MSN complex which is disrupted upon TCR activation. Forms a complex with CFTR and SLC4A7. Forms a complex with SLC4A7 and ATP6V1B1. Interacts with TRPC4 (via the PDZ-binding domain). Directly interacts with HTR4. Interacts (via the PDZ 1 domain) with PODXL (via the C-terminal PDZ-binding motif DTHL); interaction is not detected in glomerular epithelium cells. Interacts (via the PDZ 1 domain) with PODXL (via the C-terminal PDZ-binding motif DTHL); the interaction take place early in the secretory pathway and is necessary for its apical membrane sorting. Interacts with SLC26A3. Interacts with MCC. Interacts with SLC34A1. Interacts (via the PDZ domains) with SLC26A6 isoform 4 and isoform 5. Interacts (via PDZ domains) with ACE2 (via PDZ-binding motif); the interaction may enhance ACE2 membrane residence. Post-translationally, phosphorylated on serine residues.

Its subcellular location is the cytoplasm. It is found in the apical cell membrane. The protein resides in the endomembrane system. The protein localises to the cell projection. It localises to the filopodium. Its subcellular location is the ruffle. It is found in the microvillus. Functionally, scaffold protein that connects plasma membrane proteins with members of the ezrin/moesin/radixin family and thereby helps to link them to the actin cytoskeleton and to regulate their surface expression. Necessary for recycling of internalized ADRB2. Was first known to play a role in the regulation of the activity and subcellular location of SLC9A3. Necessary for cAMP-mediated phosphorylation and inhibition of SLC9A3. Involved in sperm capacitation. May participate in the regulation of the chloride and bicarbonate homeostasis in spermatozoa. May enhance Wnt signaling. May participate in HTR4 targeting to microvilli. Involved in the regulation of phosphate reabsorption in the renal proximal tubules. The polypeptide is Na(+)/H(+) exchange regulatory cofactor NHE-RF1 (NHERF1) (Macaca fascicularis (Crab-eating macaque)).